Here is a 475-residue protein sequence, read N- to C-terminus: Ribulose bisphosphate carboxylase large chain (475 aa).

Positions methionine 1–serine 2 are excised as a propeptide. Position 3 is an N-acetylproline (proline 3). Lysine 14 is subject to N6,N6,N6-trimethyllysine. Substrate contacts are provided by asparagine 123 and threonine 173. Lysine 175 (proton acceptor) is an active-site residue. Lysine 177 serves as a coordination point for substrate. Residues lysine 201, aspartate 203, and glutamate 204 each contribute to the Mg(2+) site. The residue at position 201 (lysine 201) is an N6-carboxylysine. Histidine 294 (proton acceptor) is an active-site residue. 3 residues coordinate substrate: arginine 295, histidine 327, and serine 379.

This sequence belongs to the RuBisCO large chain family. Type I subfamily. Heterohexadecamer of 8 large chains and 8 small chains; disulfide-linked. The disulfide link is formed within the large subunit homodimers. Mg(2+) is required as a cofactor. Post-translationally, the disulfide bond which can form in the large chain dimeric partners within the hexadecamer appears to be associated with oxidative stress and protein turnover.

It localises to the plastid. The protein resides in the chloroplast. It carries out the reaction 2 (2R)-3-phosphoglycerate + 2 H(+) = D-ribulose 1,5-bisphosphate + CO2 + H2O. The catalysed reaction is D-ribulose 1,5-bisphosphate + O2 = 2-phosphoglycolate + (2R)-3-phosphoglycerate + 2 H(+). RuBisCO catalyzes two reactions: the carboxylation of D-ribulose 1,5-bisphosphate, the primary event in carbon dioxide fixation, as well as the oxidative fragmentation of the pentose substrate in the photorespiration process. Both reactions occur simultaneously and in competition at the same active site. This is Ribulose bisphosphate carboxylase large chain from Liquidambar styraciflua (Sweetgum tree).